Consider the following 318-residue polypeptide: MSFITEIKTFAALGSGVIGSGWVSRALAHGLDVVAWDPAPGAEAALRNRVAKCWGALEQQGLVPGASQNRLRFVATVEECVRDADFIQESAPERLELKLDLHSRISAAARSNVLIGSSTSGLLPSDVYESSAHPERCVVGHPFNPVYLLPLVEVVGGKNTAPAAIQAAIKVYESLGMRPLHVRKEVPGFIADRLLEALWREALHLVNDGVATTGEIDDAIRFGAGLRWSFMGTFLTYTLAGGEAGMRHFMTQFGPALQLPWTYLPAPELTDKLIDDVVDGTTDQLGKHSISGLERYRDDCLLAVLEAVKTTKARHGMA.

14 to 19 provides a ligand contact to NAD(+); the sequence is GSGVIG.

Belongs to the 3-hydroxyacyl-CoA dehydrogenase family. L-carnitine dehydrogenase subfamily. Homodimer.

Its subcellular location is the cytoplasm. It carries out the reaction carnitine + NAD(+) = 3-dehydrocarnitine + NADH + H(+). It functions in the pathway amine and polyamine metabolism; carnitine metabolism. Functionally, catalyzes the NAD(+)-dependent oxidation of L-carnitine to 3-dehydrocarnitine. The sequence is that of L-carnitine dehydrogenase from Pseudomonas syringae pv. syringae (strain B728a).